Consider the following 560-residue polypeptide: MNPDKKKRSNLIYGGYEKAPNRAFLKAMGLTDDDIAKPIVGVAVAWNEAGPCNIHLLGLSNIVKEGVRSGGGTPRVFTAPVVIDGIAMGSEGMKYSLVSREIVANTVELVVNAHGYDGFVALAGCDKTPPGMMMAMARLNIPSIIMYGGTTLPGNFKGKPITIQDVYEAVGAYSKGKITAEDLRLMEDNAIPGPGTCGGLYTANTMGLMTEALGLALPGSASPPAVDSARVKYAYETGKALMNLIEIGLKPRDILTFEAFENAITVLMASGGSTNAVLHLLAIAYEAGVKLTLDDFDRISQRTPEIVNMKPGGEYAMYDLHRVGGAPLIMKKLLEADLLHGDVITVTGKTVKQNLEEYKLPNVPHEHIVRPISNPFNPTGGIRILKGSLAPEGAVIKVSATKVRYHKGPARVFNSEEEAFKAVLEEKIQENDVVVIRYEGPKGGPGMREMLAVTSAIVGQGLGEKVALITDGRFSGATRGIMVGHVAPEAAVGGPIALLRDGDTIIIDANNGRLDVDLPQEELKKRADEWTPPPPKYKSGLLAQYARLVSSSSLGAVLLT.

A [2Fe-2S] cluster-binding site is contributed by C52. D84 serves as a coordination point for Mg(2+). A [2Fe-2S] cluster-binding site is contributed by C125. Mg(2+)-binding residues include D126 and K127. K127 carries the N6-carboxylysine modification. C197 contacts [2Fe-2S] cluster. Mg(2+) is bound at residue E449. S475 functions as the Proton acceptor in the catalytic mechanism.

Belongs to the IlvD/Edd family. Homodimer. [2Fe-2S] cluster is required as a cofactor. It depends on Mg(2+) as a cofactor.

It catalyses the reaction (2R)-2,3-dihydroxy-3-methylbutanoate = 3-methyl-2-oxobutanoate + H2O. The catalysed reaction is (2R,3R)-2,3-dihydroxy-3-methylpentanoate = (S)-3-methyl-2-oxopentanoate + H2O. Its pathway is amino-acid biosynthesis; L-isoleucine biosynthesis; L-isoleucine from 2-oxobutanoate: step 3/4. The protein operates within amino-acid biosynthesis; L-valine biosynthesis; L-valine from pyruvate: step 3/4. In terms of biological role, functions in the biosynthesis of branched-chain amino acids. Catalyzes the dehydration of (2R,3R)-2,3-dihydroxy-3-methylpentanoate (2,3-dihydroxy-3-methylvalerate) into 2-oxo-3-methylpentanoate (2-oxo-3-methylvalerate) and of (2R)-2,3-dihydroxy-3-methylbutanoate (2,3-dihydroxyisovalerate) into 2-oxo-3-methylbutanoate (2-oxoisovalerate), the penultimate precursor to L-isoleucine and L-valine, respectively. The chain is Dihydroxy-acid dehydratase from Sulfurisphaera tokodaii (strain DSM 16993 / JCM 10545 / NBRC 100140 / 7) (Sulfolobus tokodaii).